The sequence spans 494 residues: Cytochrome P450 2A6 (494 aa).

Substrate contacts are provided by Phe-107 and Asn-297. Cys-439 lines the heme pocket.

It belongs to the cytochrome P450 family. Heme is required as a cofactor. In terms of tissue distribution, liver.

The protein resides in the endoplasmic reticulum membrane. It localises to the microsome membrane. The catalysed reaction is 1,4-cineole + reduced [NADPH--hemoprotein reductase] + O2 = 2-exo-hydroxy-1,4-cineole + oxidized [NADPH--hemoprotein reductase] + H2O + H(+). Functionally, exhibits a high coumarin 7-hydroxylase activity. Can act in the hydroxylation of the anti-cancer drugs cyclophosphamide and ifosphamide. Competent in the metabolic activation of aflatoxin B1. Constitutes the major nicotine C-oxidase. Acts as a 1,4-cineole 2-exo-monooxygenase. Possesses low phenacetin O-deethylation activity. The sequence is that of Cytochrome P450 2A6 (CYP2A6) from Homo sapiens (Human).